Here is a 145-residue protein sequence, read N- to C-terminus: RING-H2 finger protein ATL18 (145 aa).

The signal sequence occupies residues methionine 1 to leucine 29. The segment at cysteine 62 to arginine 105 adopts an RING-type; atypical zinc-finger fold. The chain crosses the membrane as a helical span at residues serine 125–leucine 145.

This sequence belongs to the RING-type zinc finger family. ATL subfamily.

The protein resides in the membrane. It catalyses the reaction S-ubiquitinyl-[E2 ubiquitin-conjugating enzyme]-L-cysteine + [acceptor protein]-L-lysine = [E2 ubiquitin-conjugating enzyme]-L-cysteine + N(6)-ubiquitinyl-[acceptor protein]-L-lysine.. The protein operates within protein modification; protein ubiquitination. The sequence is that of RING-H2 finger protein ATL18 (ATL18) from Arabidopsis thaliana (Mouse-ear cress).